The sequence spans 362 residues: 3-dehydroquinate synthase (362 aa).

NAD(+) contacts are provided by residues 95–99 (GVVGD), 119–120 (TT), Lys-132, and Lys-141. 3 residues coordinate Zn(2+): Glu-174, His-238, and His-255.

Belongs to the sugar phosphate cyclases superfamily. Dehydroquinate synthase family. Co(2+) serves as cofactor. Requires Zn(2+) as cofactor. It depends on NAD(+) as a cofactor.

It localises to the cytoplasm. It carries out the reaction 7-phospho-2-dehydro-3-deoxy-D-arabino-heptonate = 3-dehydroquinate + phosphate. Its pathway is metabolic intermediate biosynthesis; chorismate biosynthesis; chorismate from D-erythrose 4-phosphate and phosphoenolpyruvate: step 2/7. Catalyzes the conversion of 3-deoxy-D-arabino-heptulosonate 7-phosphate (DAHP) to dehydroquinate (DHQ). This Chlorobium luteolum (strain DSM 273 / BCRC 81028 / 2530) (Pelodictyon luteolum) protein is 3-dehydroquinate synthase.